A 298-amino-acid polypeptide reads, in one-letter code: Proline-rich protein 32 (298 aa).

Positions 36-56 (CLSSKPEDDAEPWGQPQVPLR) are disordered.

The protein is Proline-rich protein 32 (PRR32) of Homo sapiens (Human).